Here is a 695-residue protein sequence, read N- to C-terminus: DNA ligase (695 aa).

Residues 39–43, 88–89, and glutamate 124 contribute to the NAD(+) site; these read DAEYD and SL. The active-site N6-AMP-lysine intermediate is the lysine 126. Residues arginine 147, glutamate 183, lysine 299, and lysine 323 each contribute to the NAD(+) site. Zn(2+) contacts are provided by cysteine 419, cysteine 422, cysteine 437, and cysteine 443. A BRCT domain is found at 612–695; sequence PAQGHLSGKT…ELAGIGPVGP (84 aa).

This sequence belongs to the NAD-dependent DNA ligase family. LigA subfamily. Mg(2+) serves as cofactor. The cofactor is Mn(2+).

It carries out the reaction NAD(+) + (deoxyribonucleotide)n-3'-hydroxyl + 5'-phospho-(deoxyribonucleotide)m = (deoxyribonucleotide)n+m + AMP + beta-nicotinamide D-nucleotide.. DNA ligase that catalyzes the formation of phosphodiester linkages between 5'-phosphoryl and 3'-hydroxyl groups in double-stranded DNA using NAD as a coenzyme and as the energy source for the reaction. It is essential for DNA replication and repair of damaged DNA. The sequence is that of DNA ligase from Gluconacetobacter diazotrophicus (strain ATCC 49037 / DSM 5601 / CCUG 37298 / CIP 103539 / LMG 7603 / PAl5).